The sequence spans 203 residues: Imidazole glycerol phosphate synthase subunit HisH (203 aa).

Residues 1–203 (MIGIIDYGMG…KNFGEMIKCL (203 aa)) enclose the Glutamine amidotransferase type-1 domain. The active-site Nucleophile is cysteine 79. Residues histidine 181 and glutamate 183 contribute to the active site.

In terms of assembly, heterodimer of HisH and HisF.

The protein localises to the cytoplasm. It catalyses the reaction 5-[(5-phospho-1-deoxy-D-ribulos-1-ylimino)methylamino]-1-(5-phospho-beta-D-ribosyl)imidazole-4-carboxamide + L-glutamine = D-erythro-1-(imidazol-4-yl)glycerol 3-phosphate + 5-amino-1-(5-phospho-beta-D-ribosyl)imidazole-4-carboxamide + L-glutamate + H(+). The catalysed reaction is L-glutamine + H2O = L-glutamate + NH4(+). The protein operates within amino-acid biosynthesis; L-histidine biosynthesis; L-histidine from 5-phospho-alpha-D-ribose 1-diphosphate: step 5/9. Its function is as follows. IGPS catalyzes the conversion of PRFAR and glutamine to IGP, AICAR and glutamate. The HisH subunit catalyzes the hydrolysis of glutamine to glutamate and ammonia as part of the synthesis of IGP and AICAR. The resulting ammonia molecule is channeled to the active site of HisF. This is Imidazole glycerol phosphate synthase subunit HisH from Caldanaerobacter subterraneus subsp. tengcongensis (strain DSM 15242 / JCM 11007 / NBRC 100824 / MB4) (Thermoanaerobacter tengcongensis).